The chain runs to 259 residues: Aspartate/glutamate leucyltransferase (259 aa).

It belongs to the R-transferase family. Bpt subfamily.

The protein resides in the cytoplasm. The catalysed reaction is N-terminal L-glutamyl-[protein] + L-leucyl-tRNA(Leu) = N-terminal L-leucyl-L-glutamyl-[protein] + tRNA(Leu) + H(+). It catalyses the reaction N-terminal L-aspartyl-[protein] + L-leucyl-tRNA(Leu) = N-terminal L-leucyl-L-aspartyl-[protein] + tRNA(Leu) + H(+). In terms of biological role, functions in the N-end rule pathway of protein degradation where it conjugates Leu from its aminoacyl-tRNA to the N-termini of proteins containing an N-terminal aspartate or glutamate. This Sinorhizobium medicae (strain WSM419) (Ensifer medicae) protein is Aspartate/glutamate leucyltransferase.